We begin with the raw amino-acid sequence, 336 residues long: Holliday junction branch migration complex subunit RuvB (336 aa).

Positions 1 to 182 are large ATPase domain (RuvB-L); it reads MKERIVNLET…FGMSFRMQFY (182 aa). Residues Leu-21, Arg-22, Gly-63, Lys-66, Thr-67, Ser-68, 129–131, Arg-172, Tyr-182, and Arg-219 each bind ATP; that span reads EDF. Thr-67 contacts Mg(2+). A small ATPAse domain (RuvB-S) region spans residues 183-253; the sequence is SPSELALIIK…ITLHALNELG (71 aa). A head domain (RuvB-H) region spans residues 256 to 336; the sequence is ELGFDEADLA…IPTLNPQTLF (81 aa). Positions 310 and 315 each coordinate DNA.

Belongs to the RuvB family. In terms of assembly, homohexamer. Forms an RuvA(8)-RuvB(12)-Holliday junction (HJ) complex. HJ DNA is sandwiched between 2 RuvA tetramers; dsDNA enters through RuvA and exits via RuvB. An RuvB hexamer assembles on each DNA strand where it exits the tetramer. Each RuvB hexamer is contacted by two RuvA subunits (via domain III) on 2 adjacent RuvB subunits; this complex drives branch migration. In the full resolvosome a probable DNA-RuvA(4)-RuvB(12)-RuvC(2) complex forms which resolves the HJ.

The protein resides in the cytoplasm. The enzyme catalyses ATP + H2O = ADP + phosphate + H(+). In terms of biological role, the RuvA-RuvB-RuvC complex processes Holliday junction (HJ) DNA during genetic recombination and DNA repair, while the RuvA-RuvB complex plays an important role in the rescue of blocked DNA replication forks via replication fork reversal (RFR). RuvA specifically binds to HJ cruciform DNA, conferring on it an open structure. The RuvB hexamer acts as an ATP-dependent pump, pulling dsDNA into and through the RuvAB complex. RuvB forms 2 homohexamers on either side of HJ DNA bound by 1 or 2 RuvA tetramers; 4 subunits per hexamer contact DNA at a time. Coordinated motions by a converter formed by DNA-disengaged RuvB subunits stimulates ATP hydrolysis and nucleotide exchange. Immobilization of the converter enables RuvB to convert the ATP-contained energy into a lever motion, pulling 2 nucleotides of DNA out of the RuvA tetramer per ATP hydrolyzed, thus driving DNA branch migration. The RuvB motors rotate together with the DNA substrate, which together with the progressing nucleotide cycle form the mechanistic basis for DNA recombination by continuous HJ branch migration. Branch migration allows RuvC to scan DNA until it finds its consensus sequence, where it cleaves and resolves cruciform DNA. The sequence is that of Holliday junction branch migration complex subunit RuvB from Helicobacter pylori (strain Shi470).